Consider the following 386-residue polypeptide: MTVLKMTDLDLAGKRVLIREDLNVPVKDGVVKSDARILASLPTIKLALEKGAAVLVCSHLGRPEEGVYSEEDSLAPVAAYLSKALGREVPLVKDYLGGVEVKAGELVLLENVRFNKGEKKNSDELAQQYAALCDVFVMDAFGTAHRAQGSTHGVAKFAKVACAGPLLAAELEALGKALDKPARPMLAIVAGSKVSTKLDVLNSLADICDSLIVGGGIANTFLAAAGLPVGKSLYEADLVDTAKAIAAKVSVPLPVDVVVAKAFAEDAEATVKSVKDVADDDMILDIGPQTAQQFAEMLKASQTILWNGPVGVFEFDQFGNGTKALALAIAESPAFSIAGGGDTLAAIDKYGVSEQISYISTGGGAFLEFVEGKVLPAVEVLEQRAK.

Residues 21–23 (DLN), Arg-36, 59–62 (HLGR), Arg-113, and Arg-146 contribute to the substrate site. ATP is bound by residues Lys-197, Glu-314, and 340 to 343 (GGDT).

The protein belongs to the phosphoglycerate kinase family. Monomer.

The protein localises to the cytoplasm. The enzyme catalyses (2R)-3-phosphoglycerate + ATP = (2R)-3-phospho-glyceroyl phosphate + ADP. It participates in carbohydrate degradation; glycolysis; pyruvate from D-glyceraldehyde 3-phosphate: step 2/5. The protein is Phosphoglycerate kinase of Ectopseudomonas mendocina (strain ymp) (Pseudomonas mendocina).